A 178-amino-acid polypeptide reads, in one-letter code: MORN repeat-containing protein 5 (178 aa).

MORN repeat units lie at residues 8-30 (YDGD…THTR), 31-53 (YVGE…NGSK), and 54-75 (YEGT…DGLK).

It localises to the cell projection. It is found in the cilium. Its subcellular location is the flagellum. In Danio rerio (Zebrafish), this protein is MORN repeat-containing protein 5 (morn5).